A 229-amino-acid polypeptide reads, in one-letter code: Potassium/proton antiporter CemA (229 aa).

4 helical membrane passes run 7–27 (LIPL…SLSF), 114–134 (IICF…LVIL), 154–174 (ILLL…ELMI), and 189–209 (IISG…KYWI).

This sequence belongs to the CemA family.

The protein localises to the plastid. It localises to the chloroplast inner membrane. The catalysed reaction is K(+)(in) + H(+)(out) = K(+)(out) + H(+)(in). Its function is as follows. Contributes to K(+)/H(+) antiport activity by supporting proton efflux to control proton extrusion and homeostasis in chloroplasts in a light-dependent manner to modulate photosynthesis. Prevents excessive induction of non-photochemical quenching (NPQ) under continuous-light conditions. Indirectly promotes efficient inorganic carbon uptake into chloroplasts. The polypeptide is Potassium/proton antiporter CemA (Fagus sylvatica (Beechnut)).